The following is a 118-amino-acid chain: Large ribosomal subunit protein bL17 (118 aa).

It belongs to the bacterial ribosomal protein bL17 family. Part of the 50S ribosomal subunit. Contacts protein L32.

The polypeptide is Large ribosomal subunit protein bL17 (Gemmatimonas aurantiaca (strain DSM 14586 / JCM 11422 / NBRC 100505 / T-27)).